The sequence spans 274 residues: Ommochrome-binding protein (274 aa).

The first 18 residues, 1–18 (MKLLILTICALHVNQMMA), serve as a signal peptide directing secretion. Asparagine 183 is a glycosylation site (N-linked (GlcNAc...) asparagine).

Monomer. In terms of tissue distribution, present in larval hemolymph and synthesized by the fat body.

Functionally, binds to an ommochrome, ommatin D which is a yellow chromophore. May be involved in guiding the chromophore through the hemolymph from the epidermis to the gut. The protein is Ommochrome-binding protein of Manduca sexta (Tobacco hawkmoth).